The following is a 388-amino-acid chain: Galactokinase (388 aa).

33-36 contributes to the substrate binding site; it reads EHTD. ATP contacts are provided by residues serine 67 and 124–130; that span reads GAGLSSS. Residues serine 130 and glutamate 162 each contribute to the Mg(2+) site. Aspartate 174 (proton acceptor) is an active-site residue. Tyrosine 224 contributes to the substrate binding site.

Belongs to the GHMP kinase family. GalK subfamily.

The protein localises to the cytoplasm. It carries out the reaction alpha-D-galactose + ATP = alpha-D-galactose 1-phosphate + ADP + H(+). It functions in the pathway carbohydrate metabolism; galactose metabolism. In terms of biological role, catalyzes the transfer of the gamma-phosphate of ATP to D-galactose to form alpha-D-galactose-1-phosphate (Gal-1-P). This chain is Galactokinase, found in Lacticaseibacillus paracasei (strain ATCC 334 / BCRC 17002 / CCUG 31169 / CIP 107868 / KCTC 3260 / NRRL B-441) (Lactobacillus paracasei).